Consider the following 257-residue polypeptide: Molybdate-binding protein ModA (257 aa).

The signal sequence occupies residues 1 to 24; that stretch reads MARKWLNLFAGAALSFAVAGNALA. Residues S36, S63, A149, V176, and Y194 each coordinate molybdate.

It belongs to the bacterial solute-binding protein ModA family. In terms of assembly, the complex is composed of two ATP-binding proteins (ModC), two transmembrane proteins (ModB) and a solute-binding protein (ModA).

It is found in the periplasm. In terms of biological role, part of the ABC transporter complex ModABC involved in the transport of molybdenum into the cell. Binds molybdate with high affinity in vitro and with a similar affinity in vivo. Binds tungstate with high affinity in vitro. Binds unnatural anion perrhenate with high affinity in vitro. Does not bind sulfate, phosphate, arsenate, selenate, chlorate, metavanadate, nitrate, perchlorate, permanganate or carbonate. This Escherichia coli (strain K12) protein is Molybdate-binding protein ModA (modA).